A 123-amino-acid chain; its full sequence is UPF0738 protein Bcer98_0913 (123 aa).

This sequence belongs to the UPF0738 family.

This chain is UPF0738 protein Bcer98_0913, found in Bacillus cytotoxicus (strain DSM 22905 / CIP 110041 / 391-98 / NVH 391-98).